We begin with the raw amino-acid sequence, 419 residues long: Heparan-sulfate 6-O-sulfotransferase 3-B (419 aa).

The Cytoplasmic segment spans residues 1 to 7; the sequence is MNDKPNK. Residues 8–28 form a helical; Signal-anchor for type II membrane protein membrane-spanning segment; that stretch reads WIFIPILAILFVMIGYQYVCP. Topologically, residues 29-419 are lumenal; the sequence is AGGQACHFRT…EDYASQVVRW (391 aa). Asn77 carries an N-linked (GlcNAc...) asparagine glycan. A 3'-phosphoadenylyl sulfate-binding site is contributed by 101-109; the sequence is HIQKTGGTT. Substrate is bound by residues 131–132, Arg148, Trp153, and His158; that span reads KK. His158 (proton acceptor) is an active-site residue. Arg191 and Ser199 together coordinate 3'-phosphoadenylyl sulfate. Substrate is bound by residues His203 and Trp210. 2 N-linked (GlcNAc...) asparagine glycosylation sites follow: Asn270 and Asn275. Position 323–325 (323–325) interacts with 3'-phosphoadenylyl sulfate; that stretch reads TQI. N-linked (GlcNAc...) asparagine glycosylation occurs at Asn326. 329–330 is a 3'-phosphoadenylyl sulfate binding site; sequence RA. 2 N-linked (GlcNAc...) asparagine glycosylation sites follow: Asn393 and Asn402.

Belongs to the sulfotransferase 6 family. In terms of tissue distribution, in early somitogenesis, expressed in presumptive forebrain and midbrain, tail bud and Kupffer's vesicle. During mid-somitogenesis, ubiquitous expression which is strongest in the somites and eye. During late somitogenesis, predominantly expressed in eye, hindbrain and ventral somites. At 24 hours post-fertilization (hpf), restricted to lens and neural retina, brain, otic vesicle and somites. At 36 hpf, brain expression is restricted to telencephalon. At 48 hpf, restricted to telencephalon and pectoral fin.

It is found in the membrane. The catalysed reaction is alpha-D-glucosaminyl-[heparan sulfate](n) + 3'-phosphoadenylyl sulfate = 6-sulfo-alpha-D-glucosaminyl-[heparan sulfate](n) + adenosine 3',5'-bisphosphate + H(+). Functionally, 6-O-sulfation enzyme which catalyzes the transfer of sulfate from 3'-phosphoadenosine 5'-phosphosulfate (PAPS) to position 6 of the N-sulfoglucosamine residue (GlcNS) of heparan sulfate. The chain is Heparan-sulfate 6-O-sulfotransferase 3-B from Danio rerio (Zebrafish).